The sequence spans 327 residues: Glutaminase 1 (327 aa).

Substrate is bound by residues serine 74, asparagine 126, glutamate 170, asparagine 177, tyrosine 201, tyrosine 253, and valine 271.

Belongs to the glutaminase family. In terms of assembly, homotetramer.

It carries out the reaction L-glutamine + H2O = L-glutamate + NH4(+). The polypeptide is Glutaminase 1 (glsA1) (Bacillus subtilis (strain 168)).